We begin with the raw amino-acid sequence, 101 residues long: MSRSLAIEGQLRPADAKPNALRRNGKIPAVLYGPTIESSISLVVDTRAAELLVRDARPQKTPIQLSIPDLPWQGTVVLQEVQAHPAKDTLYHLSFLAKAEN.

It belongs to the bacterial ribosomal protein bL25 family. Part of the 50S ribosomal subunit; part of the 5S rRNA/L5/L18/L25 subcomplex. Contacts the 5S rRNA. Binds to the 5S rRNA independently of L5 and L18.

Its function is as follows. This is one of the proteins that binds to the 5S RNA in the ribosome where it forms part of the central protuberance. The protein is Large ribosomal subunit protein bL25 of Thermosynechococcus vestitus (strain NIES-2133 / IAM M-273 / BP-1).